The following is a 67-amino-acid chain: Large ribosomal subunit protein uL29 (67 aa).

Belongs to the universal ribosomal protein uL29 family.

The polypeptide is Large ribosomal subunit protein uL29 (Ehrlichia ruminantium (strain Gardel)).